A 378-amino-acid polypeptide reads, in one-letter code: MFEFVCQQECAHTQARAGLFHTPHGTVATPRFMPVGTLANVKTLTPEHLKAAGAQMILANTYHLHLQPGEDIVAAAGGLHCFMGWSGPILTDSGGFQVFSLSEMRQISDQGVVFRSPHDGQIIELSPEGAIAIQEALGADVIMAFDECPPYPASREAVIQATQRTLQWLERCIVAKQRSDQALFAIVQGGVYADLRRECAEAMVPYDLPGYAIGGVSVGEPNRIMHEIVAVTAPLLPVHKPRYLMGVGTHLEMLRAIAAGVDLFDCVIPTRLARHGCAIVQGQRWNLKNARFRRDYEPLDPTCPCYTCRTFSRAYLSHLVRAKELLAYTLLSIHNVTELIRFTQAARQAILEERFAAFAAEWEQRLVVDAEEPDAALL.

Asp-92 (proton acceptor) is an active-site residue. Substrate is bound by residues 92-96 (DSGGF), Asp-146, Gln-188, and Gly-215. The RNA binding stretch occupies residues 246–252 (GVGTHLE). Asp-265 acts as the Nucleophile in catalysis. Positions 270-274 (TRLAR) are RNA binding; important for wobble base 34 recognition. Residues Cys-303, Cys-305, Cys-308, and His-334 each contribute to the Zn(2+) site.

It belongs to the queuine tRNA-ribosyltransferase family. In terms of assembly, homodimer. Within each dimer, one monomer is responsible for RNA recognition and catalysis, while the other monomer binds to the replacement base PreQ1. It depends on Zn(2+) as a cofactor.

It carries out the reaction 7-aminomethyl-7-carbaguanine + guanosine(34) in tRNA = 7-aminomethyl-7-carbaguanosine(34) in tRNA + guanine. It participates in tRNA modification; tRNA-queuosine biosynthesis. In terms of biological role, catalyzes the base-exchange of a guanine (G) residue with the queuine precursor 7-aminomethyl-7-deazaguanine (PreQ1) at position 34 (anticodon wobble position) in tRNAs with GU(N) anticodons (tRNA-Asp, -Asn, -His and -Tyr). Catalysis occurs through a double-displacement mechanism. The nucleophile active site attacks the C1' of nucleotide 34 to detach the guanine base from the RNA, forming a covalent enzyme-RNA intermediate. The proton acceptor active site deprotonates the incoming PreQ1, allowing a nucleophilic attack on the C1' of the ribose to form the product. After dissociation, two additional enzymatic reactions on the tRNA convert PreQ1 to queuine (Q), resulting in the hypermodified nucleoside queuosine (7-(((4,5-cis-dihydroxy-2-cyclopenten-1-yl)amino)methyl)-7-deazaguanosine). This is Queuine tRNA-ribosyltransferase from Thermosynechococcus vestitus (strain NIES-2133 / IAM M-273 / BP-1).